Consider the following 957-residue polypeptide: Glycine dehydrogenase (decarboxylating) (957 aa).

K708 is subject to N6-(pyridoxal phosphate)lysine.

This sequence belongs to the GcvP family. The glycine cleavage system is composed of four proteins: P, T, L and H. Pyridoxal 5'-phosphate serves as cofactor.

The catalysed reaction is N(6)-[(R)-lipoyl]-L-lysyl-[glycine-cleavage complex H protein] + glycine + H(+) = N(6)-[(R)-S(8)-aminomethyldihydrolipoyl]-L-lysyl-[glycine-cleavage complex H protein] + CO2. The glycine cleavage system catalyzes the degradation of glycine. The P protein binds the alpha-amino group of glycine through its pyridoxal phosphate cofactor; CO(2) is released and the remaining methylamine moiety is then transferred to the lipoamide cofactor of the H protein. This chain is Glycine dehydrogenase (decarboxylating), found in Escherichia fergusonii (strain ATCC 35469 / DSM 13698 / CCUG 18766 / IAM 14443 / JCM 21226 / LMG 7866 / NBRC 102419 / NCTC 12128 / CDC 0568-73).